Here is a 103-residue protein sequence, read N- to C-terminus: Small ribosomal subunit protein uS10 (103 aa).

Belongs to the universal ribosomal protein uS10 family. As to quaternary structure, part of the 30S ribosomal subunit.

Functionally, involved in the binding of tRNA to the ribosomes. The protein is Small ribosomal subunit protein uS10 of Shewanella denitrificans (strain OS217 / ATCC BAA-1090 / DSM 15013).